Reading from the N-terminus, the 203-residue chain is CS5 fimbrial subunit (203 aa).

A signal peptide spans 1-22 (MKKNLLITSVLAMATVSGSVLA).

The protein localises to the fimbrium. Its function is as follows. Major subunit of fimbriae. Fimbriae (also called pili), are polar filaments radiating from the surface of the bacterium to a length of 0.5-1.5 micrometers and numbering 100-300 per cell. They enable bacteria to colonize the epithelium of specific host organs. This chain is CS5 fimbrial subunit, found in Escherichia coli.